Here is a 295-residue protein sequence, read N- to C-terminus: Light-independent protochlorophyllide reductase iron-sulfur ATP-binding protein (295 aa).

Residues glycine 39 to threonine 44 and lysine 68 contribute to the ATP site. Serine 43 lines the Mg(2+) pocket. Residues cysteine 124 and cysteine 158 each coordinate [4Fe-4S] cluster. Asparagine 209–arginine 210 contacts ATP.

This sequence belongs to the NifH/BchL/ChlL family. In terms of assembly, homodimer. Protochlorophyllide reductase is composed of three subunits; ChlL, ChlN and ChlB. [4Fe-4S] cluster serves as cofactor.

The enzyme catalyses chlorophyllide a + oxidized 2[4Fe-4S]-[ferredoxin] + 2 ADP + 2 phosphate = protochlorophyllide a + reduced 2[4Fe-4S]-[ferredoxin] + 2 ATP + 2 H2O. Its pathway is porphyrin-containing compound metabolism; chlorophyll biosynthesis (light-independent). Component of the dark-operative protochlorophyllide reductase (DPOR) that uses Mg-ATP and reduced ferredoxin to reduce ring D of protochlorophyllide (Pchlide) to form chlorophyllide a (Chlide). This reaction is light-independent. The L component serves as a unique electron donor to the NB-component of the complex, and binds Mg-ATP. This Prochlorococcus marinus (strain MIT 9515) protein is Light-independent protochlorophyllide reductase iron-sulfur ATP-binding protein.